The following is a 304-amino-acid chain: Pyridoxal 5'-phosphate synthase subunit pyroA (304 aa).

Aspartate 28 contacts D-ribose 5-phosphate. Lysine 85 acts as the Schiff-base intermediate with D-ribose 5-phosphate in catalysis. Residue glycine 157 coordinates D-ribose 5-phosphate. A D-glyceraldehyde 3-phosphate-binding site is contributed by arginine 169. D-ribose 5-phosphate is bound by residues glycine 224 and 245 to 246 (GS).

Belongs to the PdxS/SNZ family.

The enzyme catalyses aldehydo-D-ribose 5-phosphate + D-glyceraldehyde 3-phosphate + L-glutamine = pyridoxal 5'-phosphate + L-glutamate + phosphate + 3 H2O + H(+). Its pathway is cofactor biosynthesis; pyridoxal 5'-phosphate biosynthesis. Catalyzes the formation of pyridoxal 5'-phosphate from ribose 5-phosphate (RBP), glyceraldehyde 3-phosphate (G3P) and ammonia. The ammonia is provided by PDX2. Can also use ribulose 5-phosphate and dihydroxyacetone phosphate as substrates, resulting from enzyme-catalyzed isomerization of RBP and G3P, respectively. Also plays an indirect role in resistance to singlet oxygen-generating photosensitizers. The polypeptide is Pyridoxal 5'-phosphate synthase subunit pyroA (pyroA) (Emericella nidulans (strain FGSC A4 / ATCC 38163 / CBS 112.46 / NRRL 194 / M139) (Aspergillus nidulans)).